We begin with the raw amino-acid sequence, 71 residues long: Sec-independent protein translocase protein TatA (71 aa).

A helical membrane pass occupies residues 1 to 21 (MGASPVQLLIVLFIAVLVFGG).

This sequence belongs to the TatA/E family. As to quaternary structure, the Tat system comprises two distinct complexes: a TatABC complex, containing multiple copies of TatA, TatB and TatC subunits, and a separate TatA complex, containing only TatA subunits. Substrates initially bind to the TatABC complex, which probably triggers association of the separate TatA complex to form the active translocon.

It is found in the cell inner membrane. Its function is as follows. Part of the twin-arginine translocation (Tat) system that transports large folded proteins containing a characteristic twin-arginine motif in their signal peptide across membranes. TatA could form the protein-conducting channel of the Tat system. The protein is Sec-independent protein translocase protein TatA of Dichelobacter nodosus (strain VCS1703A).